The chain runs to 822 residues: Putative ESX-1 scaffolding and assembly protein SaeB (822 aa).

May be involved in assembly of the ESX-1 / type VII specialized secretion system (T7SS), which exports several proteins including EsxA and EsxB. Involved in DNA conjugation in recipient (MKD8) but not donor (mc(2)155) strain. The polypeptide is Putative ESX-1 scaffolding and assembly protein SaeB (saeB) (Mycolicibacterium smegmatis (strain MKD8) (Mycobacterium smegmatis)).